Reading from the N-terminus, the 211-residue chain is tRNA (guanine-N(7)-)-methyltransferase (211 aa).

Residues E43, E68, D95, and D117 each contribute to the S-adenosyl-L-methionine site. D117 is an active-site residue. Residues K121, D153, and 190–193 (TEYE) contribute to the substrate site.

This sequence belongs to the class I-like SAM-binding methyltransferase superfamily. TrmB family.

The enzyme catalyses guanosine(46) in tRNA + S-adenosyl-L-methionine = N(7)-methylguanosine(46) in tRNA + S-adenosyl-L-homocysteine. Its pathway is tRNA modification; N(7)-methylguanine-tRNA biosynthesis. Its function is as follows. Catalyzes the formation of N(7)-methylguanine at position 46 (m7G46) in tRNA. This Staphylococcus saprophyticus subsp. saprophyticus (strain ATCC 15305 / DSM 20229 / NCIMB 8711 / NCTC 7292 / S-41) protein is tRNA (guanine-N(7)-)-methyltransferase.